The following is a 605-amino-acid chain: DNA primase (605 aa).

The segment at 38-62 adopts a CHC2-type zinc-finger fold; sequence CPFHDEKTPSFTVSEDKQICHCFGC. A Toprim domain is found at 260–341; the sequence is DEIVLLEGFM…NVFVIQLPSG (82 aa). Mg(2+) contacts are provided by Glu-266, Asp-310, and Asp-312.

It belongs to the DnaG primase family. Monomer. Interacts with DnaB. It depends on Zn(2+) as a cofactor. Mg(2+) serves as cofactor.

The enzyme catalyses ssDNA + n NTP = ssDNA/pppN(pN)n-1 hybrid + (n-1) diphosphate.. RNA polymerase that catalyzes the synthesis of short RNA molecules used as primers for DNA polymerase during DNA replication. The polypeptide is DNA primase (Staphylococcus aureus (strain MSSA476)).